The primary structure comprises 325 residues: Isoaspartyl peptidase/L-asparaginase (325 aa).

The Nucleophile role is filled by Thr193. Substrate is bound by residues Arg221–Asp224 and Thr243–Gly246.

The protein belongs to the Ntn-hydrolase family. In terms of assembly, heterotetramer of two alpha and two beta chains arranged as a dimer of alpha/beta heterodimers. In terms of processing, cleaved into an alpha and beta chain by autocatalysis; this activates the enzyme. The N-terminal residue of the beta subunit is responsible for the nucleophile hydrolase activity. Developing seeds.

It carries out the reaction Cleavage of a beta-linked Asp residue from the N-terminus of a polypeptide.. Acts in asparagine catabolism but also in the final steps of protein degradation via hydrolysis of a range of isoaspartyl dipeptides. This chain is Isoaspartyl peptidase/L-asparaginase, found in Lupinus angustifolius (Narrow-leaved blue lupine).